Consider the following 269-residue polypeptide: Energy-coupling factor transporter ATP-binding protein EcfA1 (269 aa).

Residues I8–D242 enclose the ABC transporter domain. G42–S49 serves as a coordination point for ATP.

The protein belongs to the ABC transporter superfamily. Energy-coupling factor EcfA family. Forms a stable energy-coupling factor (ECF) transporter complex composed of 2 membrane-embedded substrate-binding proteins (S component), 2 ATP-binding proteins (A component) and 2 transmembrane proteins (T component).

It is found in the cell membrane. Its function is as follows. ATP-binding (A) component of a common energy-coupling factor (ECF) ABC-transporter complex. Unlike classic ABC transporters this ECF transporter provides the energy necessary to transport a number of different substrates. The chain is Energy-coupling factor transporter ATP-binding protein EcfA1 from Staphylococcus aureus (strain Mu50 / ATCC 700699).